The sequence spans 439 residues: Proline--tRNA ligase (439 aa).

Belongs to the class-II aminoacyl-tRNA synthetase family. ProS type 2 subfamily. As to quaternary structure, homodimer.

It localises to the cytoplasm. The catalysed reaction is tRNA(Pro) + L-proline + ATP = L-prolyl-tRNA(Pro) + AMP + diphosphate. Functionally, catalyzes the attachment of proline to tRNA(Pro) in a two-step reaction: proline is first activated by ATP to form Pro-AMP and then transferred to the acceptor end of tRNA(Pro). The chain is Proline--tRNA ligase from Phenylobacterium zucineum (strain HLK1).